Consider the following 98-residue polypeptide: Integration host factor subunit beta (98 aa).

The protein belongs to the bacterial histone-like protein family. As to quaternary structure, heterodimer of an alpha and a beta chain.

Its function is as follows. This protein is one of the two subunits of integration host factor, a specific DNA-binding protein that functions in genetic recombination as well as in transcriptional and translational control. The protein is Integration host factor subunit beta of Gluconacetobacter diazotrophicus (strain ATCC 49037 / DSM 5601 / CCUG 37298 / CIP 103539 / LMG 7603 / PAl5).